Here is a 269-residue protein sequence, read N- to C-terminus: MVRIAIAGAAGRMGRNLVKATHQNPLSELGAGSERPESSLVGVDIGELCGIGKQGIVLVDNLEQAVEQFDVIIDFTAPASTLANLALCEQHGKKLVIGTTGFTDAQRQTIEQAAKKIPIVMAPNYSVGVNLVFKLLEKAAKVMGDYCDIEIIEAHHRHKVDAPSGTAIGMGEAIAHAMGNQLSDVAVYAREGITGERSRNEIGFATIRAGDIIGEHTAMFADIGERVEITHKATDRMTFANGAVKAAIWLAEQPAGFYTMIDVLGLNDL.

NAD(+)-binding positions include 8-13 (GAAGRM) and Glu34. NADP(+) is bound at residue Arg35. Residues 98–100 (GTT) and 122–125 (APNY) each bind NAD(+). The active-site Proton donor/acceptor is His155. His156 serves as a coordination point for (S)-2,3,4,5-tetrahydrodipicolinate. The active-site Proton donor is the Lys159. Residue 165-166 (GT) coordinates (S)-2,3,4,5-tetrahydrodipicolinate.

The protein belongs to the DapB family.

The protein resides in the cytoplasm. It carries out the reaction (S)-2,3,4,5-tetrahydrodipicolinate + NAD(+) + H2O = (2S,4S)-4-hydroxy-2,3,4,5-tetrahydrodipicolinate + NADH + H(+). The enzyme catalyses (S)-2,3,4,5-tetrahydrodipicolinate + NADP(+) + H2O = (2S,4S)-4-hydroxy-2,3,4,5-tetrahydrodipicolinate + NADPH + H(+). It participates in amino-acid biosynthesis; L-lysine biosynthesis via DAP pathway; (S)-tetrahydrodipicolinate from L-aspartate: step 4/4. In terms of biological role, catalyzes the conversion of 4-hydroxy-tetrahydrodipicolinate (HTPA) to tetrahydrodipicolinate. This is 4-hydroxy-tetrahydrodipicolinate reductase from Vibrio cholerae serotype O1 (strain ATCC 39315 / El Tor Inaba N16961).